The chain runs to 292 residues: Acetylglutamate kinase (292 aa).

Residues 62–63 (GG), Arg84, and Asn188 contribute to the substrate site.

The protein belongs to the acetylglutamate kinase family. ArgB subfamily.

It localises to the cytoplasm. It carries out the reaction N-acetyl-L-glutamate + ATP = N-acetyl-L-glutamyl 5-phosphate + ADP. It participates in amino-acid biosynthesis; L-arginine biosynthesis; N(2)-acetyl-L-ornithine from L-glutamate: step 2/4. Catalyzes the ATP-dependent phosphorylation of N-acetyl-L-glutamate. This Methanosarcina mazei (strain ATCC BAA-159 / DSM 3647 / Goe1 / Go1 / JCM 11833 / OCM 88) (Methanosarcina frisia) protein is Acetylglutamate kinase.